We begin with the raw amino-acid sequence, 328 residues long: Biotin synthase (328 aa).

The Radical SAM core domain maps to Phe-49–Glu-273. 3 residues coordinate [4Fe-4S] cluster: Cys-67, Cys-71, and Cys-74. The [2Fe-2S] cluster site is built by Ser-110, Cys-142, Cys-201, and Arg-277.

Belongs to the radical SAM superfamily. Biotin synthase family. Homodimer. Requires [4Fe-4S] cluster as cofactor. It depends on [2Fe-2S] cluster as a cofactor.

The catalysed reaction is (4R,5S)-dethiobiotin + (sulfur carrier)-SH + 2 reduced [2Fe-2S]-[ferredoxin] + 2 S-adenosyl-L-methionine = (sulfur carrier)-H + biotin + 2 5'-deoxyadenosine + 2 L-methionine + 2 oxidized [2Fe-2S]-[ferredoxin]. The protein operates within cofactor biosynthesis; biotin biosynthesis; biotin from 7,8-diaminononanoate: step 2/2. In terms of biological role, catalyzes the conversion of dethiobiotin (DTB) to biotin by the insertion of a sulfur atom into dethiobiotin via a radical-based mechanism. This is Biotin synthase from Methanococcus vannielii (strain ATCC 35089 / DSM 1224 / JCM 13029 / OCM 148 / SB).